Here is a 291-residue protein sequence, read N- to C-terminus: 4-diphosphocytidyl-2-C-methyl-D-erythritol kinase (291 aa).

Residue lysine 11 is part of the active site. 94–104 (PAGSGLGGGSA) contacts ATP. The active site involves aspartate 136.

The protein belongs to the GHMP kinase family. IspE subfamily.

The catalysed reaction is 4-CDP-2-C-methyl-D-erythritol + ATP = 4-CDP-2-C-methyl-D-erythritol 2-phosphate + ADP + H(+). The protein operates within isoprenoid biosynthesis; isopentenyl diphosphate biosynthesis via DXP pathway; isopentenyl diphosphate from 1-deoxy-D-xylulose 5-phosphate: step 3/6. In terms of biological role, catalyzes the phosphorylation of the position 2 hydroxy group of 4-diphosphocytidyl-2C-methyl-D-erythritol. This chain is 4-diphosphocytidyl-2-C-methyl-D-erythritol kinase, found in Treponema pallidum (strain Nichols).